Consider the following 115-residue polypeptide: Protein translation factor SUI1 homolog (115 aa).

It belongs to the SUI1 family. As to expression, expressed in all tissues examined.

Probably involved in translation. The sequence is that of Protein translation factor SUI1 homolog (GOS2) from Oryza sativa subsp. indica (Rice).